The chain runs to 334 residues: Ornithine carbamoyltransferase (334 aa).

Residues 56–59 (STRT), Gln-83, Arg-107, and 134–137 (HPTQ) each bind carbamoyl phosphate. L-ornithine is bound by residues Asn-168, Asp-232, and 236–237 (SM). Carbamoyl phosphate is bound by residues 274–275 (CL) and Arg-320.

Belongs to the aspartate/ornithine carbamoyltransferase superfamily. OTCase family.

It localises to the cytoplasm. The enzyme catalyses carbamoyl phosphate + L-ornithine = L-citrulline + phosphate + H(+). It functions in the pathway amino-acid biosynthesis; L-arginine biosynthesis; L-arginine from L-ornithine and carbamoyl phosphate: step 1/3. In terms of biological role, reversibly catalyzes the transfer of the carbamoyl group from carbamoyl phosphate (CP) to the N(epsilon) atom of ornithine (ORN) to produce L-citrulline. The protein is Ornithine carbamoyltransferase of Shigella sonnei (strain Ss046).